A 1902-amino-acid chain; its full sequence is Plexin-B3 (1902 aa).

A signal peptide spans 1–36; it reads MLTDFLQAPVMAPWSPFSLHLLLLFLPLLPLTRVHR. Residues 37–461 form the Sema domain; the sequence is FSVPNTSFNH…TAQQVDRILV (425 aa). Residues 37–1245 are Extracellular-facing; it reads FSVPNTSFNH…MMSTFPVEAQ (1209 aa). N-linked (GlcNAc...) asparagine glycosylation occurs at Asn41. Disulfide bonds link Cys88–Cys97 and Cys122–Cys130. The N-linked (GlcNAc...) asparagine glycan is linked to Asn221. Intrachain disulfides connect Cys257-Cys360, Cys273-Cys305, and Cys323-Cys347. The interval 353–372 is disordered; it reads DSPESYPCGDEHTPSPIAGR. N-linked (GlcNAc...) asparagine glycans are attached at residues Asn416 and Asn469. Residues 463 to 515 form the PSI 1 domain; sequence ACPQFPNCTTCLQARDPLCGWCILQGRCTRRGECGRAAQPNHWLWSYEDNHCP. Cystine bridges form between Cys464-Cys481, Cys470-Cys514, Cys473-Cys490, Cys484-Cys496, and Cys551-Cys569. PSI domains are found at residues 609 to 671 and 776 to 822; these read DCSA…EACP and DCAM…QLCP. Residues Asn791, Asn889, Asn910, Asn946, Asn1090, and Asn1207 are each glycosylated (N-linked (GlcNAc...) asparagine). IPT/TIG domains lie at 823-914, 915-1001, 1003-1134, and 1154-1221; these read IPSI…FTYQ, DPVL…FRYT, NPQL…FLYQ, and KPGH…QMGN. Residues 1246–1266 form a helical membrane-spanning segment; the sequence is LGLGMGAAVLIAAVLLLTLMY. Residues 1267-1902 are Cytoplasmic-facing; sequence RHKSKKALRD…ALVEYKVTDL (636 aa).

Belongs to the plexin family. Binds MET and MST1R. Interacts with RIT2/RIN. May form homodimers (via Sema domain). Interacts (via cytoplasmic domain) with FSCN1, ARHGDIA and RAC1. Expressed in brain (at protein level). In cerebellum, strongest expression detected in Purkinje and granular cells. Detected at very low levels in several fetal tissues, including dorsal root ganglia (DRG), heart, lung, optic bulb, brain and liver.

It is found in the cell membrane. Receptor for SEMA5A that plays a role in axon guidance, invasive growth and cell migration. Stimulates neurite outgrowth and mediates Ca(2+)/Mg(2+)-dependent cell aggregation. In glioma cells, SEMA5A stimulation of PLXNB3 results in the disassembly of F-actin stress fibers, disruption of focal adhesions and cellular collapse as well as inhibition of cell migration and invasion through ARHGDIA-mediated inactivation of RAC1. Seem to be non-essential for normal development and function of the central nervous system. The polypeptide is Plexin-B3 (Plxnb3) (Mus musculus (Mouse)).